The chain runs to 493 residues: Transcript termination protein A18 (493 aa).

In terms of domain architecture, Helicase ATP-binding spans 100 to 256; the sequence is MIELKRPLYI…NSIINIAKLS (157 aa). 113–120 serves as a coordination point for ATP; that stretch reads LACGFGKT. Residues 206–209 carry the DESH box motif; it reads DESH.

It belongs to the helicase family. Poxviruses subfamily. Interacts with G2. Might be part of a transcription complex composed at least of G2, A18, and H5.

The protein localises to the virion. In terms of biological role, DNA helicase which seems to act as a postreplicative transcription termination factor. Involved in ATP-dependent release of nascent RNA. Forms a stable complex with single-stranded DNA, and to a lesser extent RNA. This Camelus protein is Transcript termination protein A18.